Here is a 168-residue protein sequence, read N- to C-terminus: Thiol peroxidase (168 aa).

In terms of domain architecture, Thioredoxin spans 19-168 (PQAGSKAQAF…YDAALNVLKA (150 aa)). Residue cysteine 61 is the Cysteine sulfenic acid (-SOH) intermediate of the active site. Cysteine 61 and cysteine 95 are oxidised to a cystine.

It belongs to the peroxiredoxin family. Tpx subfamily. In terms of assembly, homodimer.

It catalyses the reaction a hydroperoxide + [thioredoxin]-dithiol = an alcohol + [thioredoxin]-disulfide + H2O. Thiol-specific peroxidase that catalyzes the reduction of hydrogen peroxide and organic hydroperoxides to water and alcohols, respectively. Plays a role in cell protection against oxidative stress by detoxifying peroxides. In Salmonella typhi, this protein is Thiol peroxidase.